The chain runs to 129 residues: RutC family protein PM1466 (129 aa).

Belongs to the RutC family.

This Pasteurella multocida (strain Pm70) protein is RutC family protein PM1466.